A 258-amino-acid chain; its full sequence is UBX domain-containing protein 2A (258 aa).

Over residues 1–14 the composition is skewed to basic and acidic residues; it reads MKEVDNLDSIKEEW. Residues 1–30 are disordered; the sequence is MKEVDNLDSIKEEWACETGPPDSQPLNDNQ. Positions 1-152 are required for interaction with CHRNA3; sequence MKEVDNLDSI…SATPRIVSKA (152 aa). The segment at 1-165 is required for inhibition of CHRNA3 ubiquitination and translocation of CHRNA3 to the plasma membrane resulting in an increase in acetylcholine-gated nicotinic acetylcholine receptor currents; sequence MKEVDNLDSI…EVDNKSTLSA (165 aa). The SEP domain maps to 61–125; it reads QVDVNIKLWK…VEDKKNEVCM (65 aa). Residues 168-258 are required for interaction with VCP; the sequence is LNNLEPITRI…QKTAEPFRKL (91 aa). Residues 170 to 247 enclose the UBX domain; sequence NLEPITRIQI…DLKNAVIIQR (78 aa).

Part of a complex composed of STUB1/CHIP, VCP/p97, CHRNA3, and UBXN2A that modulates the ubiquitination and endoplasmic reticulum-associated degradation (ERAD) of CHRNA3. Within the complex UBXN2A acts as a scaffold protein required for the interaction of CHRNA3 with VCP/p97, this interaction also inhibits CHRNA3 ubiquitination by STUB1/CHIP and subsequently ERAD. Interacts (via SEP domain) with CHRNA3 and interacts (via UBX domain) with VCP/P97; these interactions are required for the interaction of CHRNA3 with the STUB1-VCP-UBXN2A complex. Interacts with HSPA9/MOT-2 (via SBD domain); the interaction inhibits HSPA9/MOT-2 interaction with and degradation of p53, thereby promotes p53 translocation to the nucleus. Interacts with RICTOR. Ubiquitinated. As to expression, expressed in the prefrontal cortex (at protein level). Expressed in the habenula and hippocampus (at protein level). Expressed in peripheral ganglia.

Its subcellular location is the golgi apparatus. It localises to the endoplasmic reticulum. The protein localises to the perikaryon. It is found in the cell projection. The protein resides in the dendrite. Its subcellular location is the nucleus. It localises to the cytoplasm. In terms of biological role, acts to repress the ubiquitination and subsequent endoplasmic reticulum-associated degradation of CHRNA3 by the STUB1-VCP-UBXN2A complex in cortical neurons. Also acts to promote the translocation of CHRNA3 to the plasma membrane and subsequently increases plasma membrane acetylcholine-gated ion-channel activation. Plays a role in the inhibition of STUB1-mediated TP53 degradation, via its interaction with HSPA9 which acts to inhibit TP53 binding to HSPA9. Positively mediates the ubiquitination and proteosomal degradation of RICTOR, may thereby act as a negative regulator of the mTORC2 pathway. In Mus musculus (Mouse), this protein is UBX domain-containing protein 2A.